Consider the following 106-residue polypeptide: Thioredoxin-like protein YusE (106 aa).

The Thioredoxin domain maps to 1-101 (MKELQEHELD…LYELIKQKSS (101 aa)). A disulfide bridge connects residues Cys26 and Cys29.

The protein is Thioredoxin-like protein YusE (yusE) of Bacillus subtilis (strain 168).